Reading from the N-terminus, the 253-residue chain is Tetraspanin-3 (253 aa).

Topologically, residues 1-11 (MGQCGITSSKT) are cytoplasmic. A helical membrane pass occupies residues 12–32 (VLVFLNLIFWGAAGILCYVGA). Topologically, residues 33–50 (YVFITYDDYDHFFEDVYT) are extracellular. The chain crosses the membrane as a helical span at residues 51–71 (LFPAVVIIAVGALLFIIGLIG). Residues 72-85 (CCATIRESRCGLAT) are Cytoplasmic-facing. The helical transmembrane segment at 86–106 (FVFILLLVFVTEVVVVVLGYV) threads the bilayer. Residues 107 to 212 (YRAKVENEVD…KKLQEILMHV (106 aa)) lie on the Extracellular side of the membrane. N-linked (GlcNAc...) asparagine glycosylation is found at N127, N152, N167, and N183. A helical membrane pass occupies residues 213–233 (IWAALAFAAIQLLGMLCACIV). Residues 234–253 (LCRRSRDPAYELLITGGTYA) lie on the Cytoplasmic side of the membrane.

Belongs to the tetraspanin (TM4SF) family. As to quaternary structure, interacts with claudin-11/CLDN11 and integrins.

The protein localises to the membrane. Functionally, regulates the proliferation and migration of oligodendrocytes, a process essential for normal myelination and repair. This is Tetraspanin-3 (Tspan3) from Mus musculus (Mouse).